A 104-amino-acid chain; its full sequence is MAAKIRRQDEVIVLAGKDKGKRAKVAQVLPTGKLIVEGINLVKKHQKPNPQLGVAGGIVEKEAPIQASNVAIFNPVTGKADRVGFRFEDGKKVRFFKSNSELVK.

The protein belongs to the universal ribosomal protein uL24 family. Part of the 50S ribosomal subunit.

In terms of biological role, one of two assembly initiator proteins, it binds directly to the 5'-end of the 23S rRNA, where it nucleates assembly of the 50S subunit. One of the proteins that surrounds the polypeptide exit tunnel on the outside of the subunit. The protein is Large ribosomal subunit protein uL24 of Shewanella oneidensis (strain ATCC 700550 / JCM 31522 / CIP 106686 / LMG 19005 / NCIMB 14063 / MR-1).